The following is a 712-amino-acid chain: Satratoxin biosynthesis SC3 cluster transcription factor SAT20 (712 aa).

4 stretches are compositionally biased toward polar residues: residues 1-10 (MPNLPGSSDS), 25-36 (CSSTKPNAAQEN), 131-145 (SEPS…WPSL), and 269-282 (SLPS…SSTG). Disordered stretches follow at residues 1–43 (MPNL…ELAQ), 115–145 (SQNA…WPSL), and 264–294 (PVSG…KADR). A DNA-binding region (zn(2)-C6 fungal-type) is located at residues 306–339 (CFRCRMYKENCDPGLPCKNCMRVQVTRRTFFGPC). The stretch at 530–560 (QIQIMVAQVMLDKQKNALKRLQERALSKNRH) forms a coiled coil.

The protein localises to the nucleus. Transcriptional regulator that may regulate the expression of the satratoxin biosynthesis SC3 cluster, one of the 3 clusters involved in the biosynthesis of satratoxins, trichothecene mycotoxins that are associated with human food poisonings. The sequence is that of Satratoxin biosynthesis SC3 cluster transcription factor SAT20 from Stachybotrys chartarum (strain CBS 109288 / IBT 7711) (Toxic black mold).